Reading from the N-terminus, the 129-residue chain is Lysozyme C, milk isozyme (129 aa).

One can recognise a C-type lysozyme domain in the interval 1–129 (KIFSKCELAR…LSKYLASCNL (129 aa)). 4 cysteine pairs are disulfide-bonded: Cys6–Cys127, Cys30–Cys115, Cys65–Cys80, and Cys76–Cys94. Catalysis depends on residues Glu35 and Asp53. The Ca(2+) site is built by Lys82, Asp85, Asn87, Asp90, and Asp91.

This sequence belongs to the glycosyl hydrolase 22 family. Monomer. It depends on Ca(2+) as a cofactor.

The enzyme catalyses Hydrolysis of (1-&gt;4)-beta-linkages between N-acetylmuramic acid and N-acetyl-D-glucosamine residues in a peptidoglycan and between N-acetyl-D-glucosamine residues in chitodextrins.. Lysozymes have primarily a bacteriolytic function; those in tissues and body fluids are associated with the monocyte-macrophage system and enhance the activity of immunoagents. This chain is Lysozyme C, milk isozyme, found in Canis lupus familiaris (Dog).